Here is a 91-residue protein sequence, read N- to C-terminus: Small ribosomal subunit protein uS19 (91 aa).

The protein belongs to the universal ribosomal protein uS19 family.

Functionally, protein S19 forms a complex with S13 that binds strongly to the 16S ribosomal RNA. The polypeptide is Small ribosomal subunit protein uS19 (Psychrobacter sp. (strain PRwf-1)).